A 1052-amino-acid chain; its full sequence is Suppressor of RPS4-RLD 1 (1052 aa).

N-acetylalanine is present on Ala2. TPR repeat units lie at residues 39 to 72 and 74 to 106; these read ILDI…EPFA and QAFI…ALQQ. The stretch at 107-136 forms a coiled coil; the sequence is TADVKQLLELEELLKDARREIDGILKSHAT. The segment at 131–181 is disordered; the sequence is LKSHATESPQETPAYHSEKSDEKSDKLDNHESGASSNGNSHESSSELGEQS. Basic and acidic residues predominate over residues 146 to 161; that stretch reads HSEKSDEKSDKLDNHE. Residues 162–181 are compositionally biased toward low complexity; the sequence is SGASSNGNSHESSSELGEQS. TPR repeat units lie at residues 297–330, 331–364, 365–398, 400–432, 433–466, 468–500, 502–534, 535–567, and 569–591; these read VDFR…EPTY, PEAL…NPAA, SEAW…EPNS, DVLH…EKDN, KSAY…DSNY, EAWL…DNRV, KAYH…ENTI, ECLY…ELDA, and EKFV…ASKV. Positions 704-739 are disordered; that stretch reads STKGTTKNGKKNRRRERTNILSQNRGGAGCSSSSFS. A helical transmembrane segment spans residues 966-986; sequence GTAVTGFVVLLGLLLAANMEF.

In terms of assembly, multimer. Interacts with EDS1. Interacts with SNC1 and RPS4. Interacts (via TPR domain) with SGT1 (via TPR domain). Interacts with the TCP transcription factors TCP8, TCP14, TCP15, TCP20, TCP22 and TCP23. As to expression, ubiquitous. Not detected in very young flowers and older siliques.

The protein resides in the nucleus. It localises to the cytoplasm. It is found in the perinuclear region. Its subcellular location is the membrane. The protein localises to the microsome. Functionally, negative regulator of effector-triggered immunity associated with the EDS1 resistance pathway. May localize its interactors to a microsomal membrane. May therefore negatively regulate RPS4 and SNC1 translocation to the nucleus. Contributes to the regulation of RPS2 and RPS4 protein levels and negatively regulates SNC1 stability. The protein is Suppressor of RPS4-RLD 1 of Arabidopsis thaliana (Mouse-ear cress).